The chain runs to 277 residues: S-formylglutathione hydrolase FrmB (277 aa).

Active-site charge relay system residues include serine 145, aspartate 221, and histidine 254.

It belongs to the esterase D family.

The catalysed reaction is S-formylglutathione + H2O = formate + glutathione + H(+). Functionally, serine hydrolase involved in the detoxification of formaldehyde. Hydrolyzes S-formylglutathione to glutathione and formate. This is S-formylglutathione hydrolase FrmB (frmB) from Escherichia coli O157:H7.